We begin with the raw amino-acid sequence, 183 residues long: Nucleoside triphosphate pyrophosphatase (183 aa).

Aspartate 71 (proton acceptor) is an active-site residue.

It belongs to the Maf family. A divalent metal cation serves as cofactor.

It is found in the cytoplasm. The catalysed reaction is a ribonucleoside 5'-triphosphate + H2O = a ribonucleoside 5'-phosphate + diphosphate + H(+). It catalyses the reaction a 2'-deoxyribonucleoside 5'-triphosphate + H2O = a 2'-deoxyribonucleoside 5'-phosphate + diphosphate + H(+). Nucleoside triphosphate pyrophosphatase. May have a dual role in cell division arrest and in preventing the incorporation of modified nucleotides into cellular nucleic acids. The sequence is that of Nucleoside triphosphate pyrophosphatase from Campylobacter jejuni subsp. jejuni serotype O:6 (strain 81116 / NCTC 11828).